The chain runs to 296 residues: D-alanine--D-alanine ligase (296 aa).

Positions 103 to 293 (KEILMHHRMP…FDSFVKRIIE (191 aa)) constitute an ATP-grasp domain. Position 129 to 180 (129 to 180 (ISFPVAVKPSSGGSSIATFKVKSIQELKHAYEEASKYGEVMIEQWVTGKEIT)) interacts with ATP. The Mg(2+) site is built by Asp-247, Glu-260, and Asn-262.

This sequence belongs to the D-alanine--D-alanine ligase family. It depends on Mg(2+) as a cofactor. Mn(2+) is required as a cofactor.

It is found in the cytoplasm. It carries out the reaction 2 D-alanine + ATP = D-alanyl-D-alanine + ADP + phosphate + H(+). Its pathway is cell wall biogenesis; peptidoglycan biosynthesis. Its function is as follows. Cell wall formation. The polypeptide is D-alanine--D-alanine ligase (Francisella tularensis subsp. tularensis (strain FSC 198)).